A 343-amino-acid chain; its full sequence is Leucine-rich repeat-containing protein 39 (343 aa).

10 LRR repeats span residues 64–87, 88–110, 111–133, 134–156, 158–180, 181–203, 204–226, 228–249, 250–274, and 275–295; these read EEGR…LVQL, SQIQ…ISSF, QSLI…IGKL, TRLR…LGCC, NLEK…LSNL, KKLS…VVNL, PSLE…IHRM, KLHT…ISRM, KSLD…GMSN, and LRFV…PDLN.

Its subcellular location is the cytoplasm. It is found in the myofibril. The protein localises to the sarcomere. It localises to the m line. Component of the sarcomeric M-band which plays a role in myocyte response to biomechanical stress. May regulate expression of other M-band proteins via an SRF-dependent pathway. Important for normal contractile function in heart. The polypeptide is Leucine-rich repeat-containing protein 39 (Danio rerio (Zebrafish)).